A 120-amino-acid chain; its full sequence is uncharacterized protein (120 aa).

The helical transmembrane segment at 19 to 41 (YPELFITWCVMTYTFGVAGYMLG) threads the bilayer. A disordered region spans residues 57–78 (SKNAHPWEDTKSSSGKSDESLD). Positions 61-75 (HPWEDTKSSSGKSDE) are enriched in basic and acidic residues.

It localises to the membrane. This is an uncharacterized protein from Schizosaccharomyces pombe (strain 972 / ATCC 24843) (Fission yeast).